We begin with the raw amino-acid sequence, 515 residues long: 3,4-dehydroadipyl-CoA semialdehyde dehydrogenase (515 aa).

Active-site residues include Glu255 and Cys294. Residues 470-515 (VMPTCLHGGPRARRRRRGVGRSARAGDVSPPLRRAGRPRGAGSPVA) form a disordered region. Over residues 479-488 (PRARRRRRGV) the composition is skewed to basic residues. A compositionally biased stretch (low complexity) spans 489–515 (GRSARAGDVSPPLRRAGRPRGAGSPVA).

It belongs to the aldehyde dehydrogenase family. As to quaternary structure, homodimer.

It carries out the reaction (3Z)-6-oxohex-3-enoyl-CoA + NADP(+) + H2O = cis-3,4-dehydroadipyl-CoA + NADPH + 2 H(+). Its function is as follows. Catalyzes the NADP-dependent oxidation of 3,4-dehydroadipyl-CoA semialdehyde to form cis-3,4-dehydroadipyl-CoA. The protein is 3,4-dehydroadipyl-CoA semialdehyde dehydrogenase (boxD) of Aromatoleum evansii (Azoarcus evansii).